We begin with the raw amino-acid sequence, 246 residues long: MADKRFFGTKTFPNQEKALKAKIMNNDAFISWIEKNLGHRPKDPALFLRAMTHPSHGNSDYQRLEFLGDRVLGLVIANWLYDLFPREPEGKLSRRLNSLVSGASCASIARIVGLPQWLRLGKQARDDGAAASDNVLGDVMEAMIGAIFLESGIEAAGKLIHKYWAPLVTGQESAPKHPKSALQEWAAAHNRRPPVYEIVSRTGPQHNPCFTIQVSIAGVGEASAEGSSKQEAQTAAAQALLDILAQ.

The 123-residue stretch at 30-152 (ISWIEKNLGH…MIGAIFLESG (123 aa)) folds into the RNase III domain. Glu65 is a binding site for Mg(2+). Asp69 is a catalytic residue. The Mg(2+) site is built by Asp138 and Glu141. Residue Glu141 is part of the active site. A DRBM domain is found at 177–246 (HPKSALQEWA…AQALLDILAQ (70 aa)).

The protein belongs to the ribonuclease III family. As to quaternary structure, homodimer. Mg(2+) serves as cofactor.

The protein localises to the cytoplasm. It carries out the reaction Endonucleolytic cleavage to 5'-phosphomonoester.. Digests double-stranded RNA. Involved in the processing of primary rRNA transcript to yield the immediate precursors to the large and small rRNAs (23S and 16S). Processes some mRNAs, and tRNAs when they are encoded in the rRNA operon. Processes pre-crRNA and tracrRNA of type II CRISPR loci if present in the organism. This Zymomonas mobilis subsp. mobilis (strain ATCC 31821 / ZM4 / CP4) protein is Ribonuclease 3.